The following is a 486-amino-acid chain: Cytochrome P450 monooxygenase 1 (486 aa).

The signal sequence occupies residues 1 to 21; it reads MSHFLPTLILTSLTLVAYVLA. N346 is a glycosylation site (N-linked (GlcNAc...) asparagine). C430 provides a ligand contact to heme. N434 carries an N-linked (GlcNAc...) asparagine glycan.

This sequence belongs to the cytochrome P450 family. Heme serves as cofactor.

The protein operates within mycotoxin biosynthesis. Its function is as follows. Cytochrome P450 monooxygenase; part of the gene cluster that mediates the biosynthesis of aphidicolin, a specific inhibitor of eukaryotic DNA synthesis and DNA polymerase alpha. The geranylgeranyl pyrophosphate synthase GGS is required for supplying a sufficient amount of geranylgeranyl diphosphate (GGDP), the general precursor of diterpenes. The diterpene synthase ACS then catalyzes the conversion of geranylgeranyl diphosphate to aphidicolan-16-beta-ol via the intermediate syn-copalyldiphosphate (syn-CDP). In addition to aphidicolan-16-beta-ol, the enzyme also produces low levels of amphidicol-15-ene and amphidicol-16-ene. The cytochrome P450 monooxygenase P450-2 then catalyzes the two-step hydroxylation from aphidicolan-16-beta-ol to 3-deoxyaphidicolin via a 17,3-deoxyaphidicolin intermediate. Finally, the cytochrome P450 monooxygenase P450-1 converts 3-deoxyaphidicolin to aphidicolin. The protein is Cytochrome P450 monooxygenase 1 (PbP450-1) of Neocamarosporium betae (Beet black rot fungus).